We begin with the raw amino-acid sequence, 443 residues long: Cyclin-A2-1 (443 aa).

The span at 1-10 shows a compositional bias: basic residues; that stretch reads MHRASSKHTN. The interval 1–61 is disordered; the sequence is MHRASSKHTN…KRVARPSNKR (61 aa). Residues 11–25 show a composition bias toward basic and acidic residues; that stretch reads AKKEAISTSKIRDNN.

It belongs to the cyclin family. Cyclin AB subfamily. As to expression, expressed in tissues with active cell division: apical root and shoot meristems, lateral root and leaf primordia, floral meristems and developing pollen.

Its function is as follows. May negatively regulate endocycles and act as a regulator of ploidy levels in endoreduplication. In Arabidopsis thaliana (Mouse-ear cress), this protein is Cyclin-A2-1 (CYCA2-1).